A 196-amino-acid chain; its full sequence is Putative NADH dehydrogenase/NAD(P)H nitroreductase Smal_0358 (196 aa).

It belongs to the nitroreductase family. HadB/RutE subfamily. FMN serves as cofactor.

The protein is Putative NADH dehydrogenase/NAD(P)H nitroreductase Smal_0358 of Stenotrophomonas maltophilia (strain R551-3).